Reading from the N-terminus, the 240-residue chain is Homeobox protein goosecoid (240 aa).

Positions 146-205 (KRRHRTIFTDEQLEALENLFQETKYPDVGTREQLARKVHLREEKVEVWFKNRRAKWRRQK) form a DNA-binding region, homeobox. The tract at residues 199–240 (AKWRRQKRSSSEESENSQKWNKSTKTTSEKIEEGKSDVDSDS) is disordered. The segment covering 225–240 (TSEKIEEGKSDVDSDS) has biased composition (basic and acidic residues).

It belongs to the paired homeobox family. Bicoid subfamily.

It is found in the nucleus. This is Homeobox protein goosecoid (gsc) from Danio rerio (Zebrafish).